A 458-amino-acid chain; its full sequence is ATP synthase subunit beta (458 aa).

148–155 lines the ATP pocket; it reads GGAGVGKT.

This sequence belongs to the ATPase alpha/beta chains family. As to quaternary structure, F-type ATPases have 2 components, CF(1) - the catalytic core - and CF(0) - the membrane proton channel. CF(1) has five subunits: alpha(3), beta(3), gamma(1), delta(1), epsilon(1). CF(0) has three main subunits: a(1), b(2) and c(9-12). The alpha and beta chains form an alternating ring which encloses part of the gamma chain. CF(1) is attached to CF(0) by a central stalk formed by the gamma and epsilon chains, while a peripheral stalk is formed by the delta and b chains.

It is found in the cell inner membrane. The catalysed reaction is ATP + H2O + 4 H(+)(in) = ADP + phosphate + 5 H(+)(out). In terms of biological role, produces ATP from ADP in the presence of a proton gradient across the membrane. The catalytic sites are hosted primarily by the beta subunits. In Pseudomonas fluorescens (strain Pf0-1), this protein is ATP synthase subunit beta.